Consider the following 548-residue polypeptide: MKIMNKQSITIFLIICFLINLILSCPNYPEPIKINQNDPTLQKAYKEVDEIIKKGMKDNGIKSFIASIVYRDEIVWSKTYGNVNPLDENSPPLTIDNAIRIASITKTFTDLMMFQLRDKGTISSLDDEVSKYFPEFSIGNLYNTKKSPTFRELSSHQSGLPREVPCDFDDLADWDICSEEVIIERLSKMFLIMPSYQSTHYSNLGIALLGRTLAKAANTEYEKYVKEKILFPLGMMNSSFYYDDVKDYLAQGLILWPNGSYTISPVEELGWSNPMGNLYSTARDMCNYMMFWLNENPEILDSTTLNEAMSPISLLNDGDTVYGTPFEMFYDQANSIWVKSKAGQLSGYRTQMALIRPLKIGMLFSSLLAFQTPDVFTKAASEILIPVYEQLLYEAGSQPQSPFIPDSKLKPTLTTEKYSKEIPNDAFVGTYTNSEGSIFIVDNSTGLLIANFGDDNLFNVSRFSDQYPEILRIKVSNPQDYLCRYVVDGSNYELVYFTITSTPFGGIECNSVTAMGQTMTLASKDPQYLKNNNIEFEKRNKLISKFLQ.

A signal peptide spans 1–24 (MKIMNKQSITIFLIICFLINLILS). 4 N-linked (GlcNAc...) asparagine glycosylation sites follow: N237, N258, N443, and N459.

This sequence belongs to the beta-lactamase family.

It localises to the secreted. The protein is Beta-lactamase-like protein 2 of Dictyostelium discoideum (Social amoeba).